A 352-amino-acid polypeptide reads, in one-letter code: Mitochondrial adenine nucleotide transporter ADNT1 (352 aa).

Solcar repeat units lie at residues Lys-36 to Gly-123, Leu-139 to Trp-227, and Leu-242 to Val-343. The next 6 membrane-spanning stretches (helical) occupy residues Ser-41–Arg-61, Gly-100–Ala-120, Leu-145–Met-162, Gly-202–Tyr-221, Leu-242–Tyr-263, and Val-324–Val-340.

This sequence belongs to the mitochondrial carrier (TC 2.A.29) family. As to expression, expressed in seedling radicles and roots, vasculature of cotyledons, leaf primordia, leaves and sepals.

It is found in the mitochondrion inner membrane. Inhibited by pyridoxal 5-phosphate, bathophenanthroline, mersalyl, p-hydroxymercuribenzoate and tannic acid. In terms of biological role, mitochondrial adenylate carrier that catalyzes specifically the transport of ATP, ADP and AMP by a counter-exchange mechanism across the inner mitochondrial membrane. Substrate preference in reconstituted proteoliposomes is ATP &gt; AMP &gt; ADP. May play a role in oxidative phosphorylation and be important for the provision of energy required to support growth in heterotrophic tissues. The protein is Mitochondrial adenine nucleotide transporter ADNT1 (ADNT1) of Arabidopsis thaliana (Mouse-ear cress).